We begin with the raw amino-acid sequence, 150 residues long: Deoxyuridine 5'-triphosphate nucleotidohydrolase (150 aa).

Residues 69–71 (RSG), N82, 86–88 (LID), and M96 contribute to the substrate site.

The protein belongs to the dUTPase family. Mg(2+) serves as cofactor.

It catalyses the reaction dUTP + H2O = dUMP + diphosphate + H(+). It participates in pyrimidine metabolism; dUMP biosynthesis; dUMP from dCTP (dUTP route): step 2/2. Its function is as follows. This enzyme is involved in nucleotide metabolism: it produces dUMP, the immediate precursor of thymidine nucleotides and it decreases the intracellular concentration of dUTP so that uracil cannot be incorporated into DNA. The sequence is that of Deoxyuridine 5'-triphosphate nucleotidohydrolase from Alcanivorax borkumensis (strain ATCC 700651 / DSM 11573 / NCIMB 13689 / SK2).